The primary structure comprises 447 residues: Probable glycine dehydrogenase (decarboxylating) subunit 1 (447 aa).

Belongs to the GcvP family. N-terminal subunit subfamily. As to quaternary structure, the glycine cleavage system is composed of four proteins: P, T, L and H. In this organism, the P 'protein' is a heterodimer of two subunits.

The catalysed reaction is N(6)-[(R)-lipoyl]-L-lysyl-[glycine-cleavage complex H protein] + glycine + H(+) = N(6)-[(R)-S(8)-aminomethyldihydrolipoyl]-L-lysyl-[glycine-cleavage complex H protein] + CO2. The glycine cleavage system catalyzes the degradation of glycine. The P protein binds the alpha-amino group of glycine through its pyridoxal phosphate cofactor; CO(2) is released and the remaining methylamine moiety is then transferred to the lipoamide cofactor of the H protein. The protein is Probable glycine dehydrogenase (decarboxylating) subunit 1 of Azorhizobium caulinodans (strain ATCC 43989 / DSM 5975 / JCM 20966 / LMG 6465 / NBRC 14845 / NCIMB 13405 / ORS 571).